Consider the following 330-residue polypeptide: MTMKQPVRVAVTGAAGQIGYSLLFRIAAGDMLGQDQPVILQLLEITPALKALNGVVMELRDGAFPLLADVITSDDPMVAFKDADYALLVGAMPRKAGMERGDLLGANGGIFKPQGEALGAVASRNVKVLVVGNPANTNALIAQQNAPDLDPKCFTAMVRLDHNRALSQLAEKTGAAVSDIKNVTIWGNHSSTQYPDLSQATVNGKPALEQVDRTWYENDYIPTVAKRGAAIIEARGASSAASAASAAIDHMHDWALGTKDGEWVSMGIPSDGSYGIPEGLIYGFPVRVKDGKYEIVQGLDVSDFSRGKMDATAQELEEERDEVRKLGLVK.

NAD(+) is bound at residue 13 to 19 (GAAGQIG). Positions 94 and 100 each coordinate substrate. NAD(+)-binding positions include Asn-107, Gln-114, and 131–133 (VGN). Residues Asn-133 and Arg-164 each contribute to the substrate site. His-189 functions as the Proton acceptor in the catalytic mechanism.

The protein belongs to the LDH/MDH superfamily. MDH type 2 family.

The enzyme catalyses (S)-malate + NAD(+) = oxaloacetate + NADH + H(+). Its function is as follows. Catalyzes the reversible oxidation of malate to oxaloacetate. The polypeptide is Malate dehydrogenase (Deinococcus radiodurans (strain ATCC 13939 / DSM 20539 / JCM 16871 / CCUG 27074 / LMG 4051 / NBRC 15346 / NCIMB 9279 / VKM B-1422 / R1)).